Reading from the N-terminus, the 408-residue chain is Elongation factor Tu (408 aa).

The tr-type G domain occupies 10 to 219 (KTHVNVGTIG…ALDTYIPDPV (210 aa)). GTP is bound by residues 19-26 (GHVDHGKT), 88-92 (DCPGH), and 143-146 (NKCD). Thr-26 contributes to the Mg(2+) binding site.

The protein belongs to the TRAFAC class translation factor GTPase superfamily. Classic translation factor GTPase family. EF-Tu/EF-1A subfamily. As to quaternary structure, monomer.

It localises to the cytoplasm. The enzyme catalyses GTP + H2O = GDP + phosphate + H(+). In terms of biological role, GTP hydrolase that promotes the GTP-dependent binding of aminoacyl-tRNA to the A-site of ribosomes during protein biosynthesis. This is Elongation factor Tu from Brachyspira hyodysenteriae (strain ATCC 49526 / WA1).